We begin with the raw amino-acid sequence, 284 residues long: MEMO1 family protein MmarC5_0191 (284 aa).

The protein belongs to the MEMO1 family.

The polypeptide is MEMO1 family protein MmarC5_0191 (Methanococcus maripaludis (strain C5 / ATCC BAA-1333)).